We begin with the raw amino-acid sequence, 229 residues long: uncharacterized protein (229 aa).

To M.pneumoniae MPN_376 central region.

This is an uncharacterized protein from Mycoplasma pneumoniae (strain ATCC 29342 / M129 / Subtype 1) (Mycoplasmoides pneumoniae).